Reading from the N-terminus, the 224-residue chain is Artemin (224 aa).

Positions 1–39 (MELGLAEPTALSHCLRPRWQSAWWPTLAVLALLSCVTEA) are cleaved as a signal peptide. Positions 40 to 111 (SLDPMSRSPA…AALRGARAAR (72 aa)) are excised as a propeptide. Residues 43–124 (PMSRSPAARD…RSSRARTTDA (82 aa)) form a disordered region. Residues 80–95 (RPPPQSPQPAPPPPGP) are compositionally biased toward pro residues. A compositionally biased stretch (low complexity) spans 96-116 (ALQSPPAALRGARAARAGTRS). 3 cysteine pairs are disulfide-bonded: Cys-127–Cys-192, Cys-154–Cys-220, and Cys-158–Cys-222. Asn-206 is a glycosylation site (N-linked (GlcNAc...) asparagine).

This sequence belongs to the TGF-beta family. GDNF subfamily. Homodimer; disulfide-linked. Interacts with GFRA3 coreceptor and RET: forms a 2:2:2 ternary complex composed of ARTN ligand, GFRA3 and RET receptor.

The protein localises to the secreted. Functionally, growth factor that supports the survival of sensory and sympathetic peripheral neurons in culture and also supports the survival of dopaminergic neurons of the ventral mid-brain. Acts by binding to its coreceptor, GFRA3, leading to autophosphorylation and activation of the RET receptor. Strong attractant of gut hematopoietic cells thus promoting the formation Peyer's patch-like structures, a major component of the gut-associated lymphoid tissue. The chain is Artemin from Mus musculus (Mouse).